The primary structure comprises 346 residues: Holliday junction branch migration complex subunit RuvB (346 aa).

The large ATPase domain (RuvB-L) stretch occupies residues 1 to 182; that stretch reads MSEAARLIAP…FGIPVRLNFY (182 aa). ATP contacts are provided by residues Arg-22, Gly-63, Lys-66, Thr-67, Thr-68, 129 to 131, Arg-172, Tyr-182, and Arg-219; that span reads EDF. Thr-67 serves as a coordination point for Mg(2+). The interval 183–253 is small ATPAse domain (RuvB-S); that stretch reads TVEELELIVR…IADEALTRLL (71 aa). A head domain (RuvB-H) region spans residues 256–346; sequence SMGLDQLDRR…SQFRLTLEDD (91 aa). Residues Arg-292, Arg-311, and Arg-316 each contribute to the DNA site.

It belongs to the RuvB family. In terms of assembly, homohexamer. Forms an RuvA(8)-RuvB(12)-Holliday junction (HJ) complex. HJ DNA is sandwiched between 2 RuvA tetramers; dsDNA enters through RuvA and exits via RuvB. An RuvB hexamer assembles on each DNA strand where it exits the tetramer. Each RuvB hexamer is contacted by two RuvA subunits (via domain III) on 2 adjacent RuvB subunits; this complex drives branch migration. In the full resolvosome a probable DNA-RuvA(4)-RuvB(12)-RuvC(2) complex forms which resolves the HJ.

The protein localises to the cytoplasm. The enzyme catalyses ATP + H2O = ADP + phosphate + H(+). The RuvA-RuvB-RuvC complex processes Holliday junction (HJ) DNA during genetic recombination and DNA repair, while the RuvA-RuvB complex plays an important role in the rescue of blocked DNA replication forks via replication fork reversal (RFR). RuvA specifically binds to HJ cruciform DNA, conferring on it an open structure. The RuvB hexamer acts as an ATP-dependent pump, pulling dsDNA into and through the RuvAB complex. RuvB forms 2 homohexamers on either side of HJ DNA bound by 1 or 2 RuvA tetramers; 4 subunits per hexamer contact DNA at a time. Coordinated motions by a converter formed by DNA-disengaged RuvB subunits stimulates ATP hydrolysis and nucleotide exchange. Immobilization of the converter enables RuvB to convert the ATP-contained energy into a lever motion, pulling 2 nucleotides of DNA out of the RuvA tetramer per ATP hydrolyzed, thus driving DNA branch migration. The RuvB motors rotate together with the DNA substrate, which together with the progressing nucleotide cycle form the mechanistic basis for DNA recombination by continuous HJ branch migration. Branch migration allows RuvC to scan DNA until it finds its consensus sequence, where it cleaves and resolves cruciform DNA. The protein is Holliday junction branch migration complex subunit RuvB of Rhizobium meliloti (strain 1021) (Ensifer meliloti).